The sequence spans 266 residues: bZIP transcription factor 12 (266 aa).

The region spanning 184–248 (AMQRQKRMIK…KELKEMVVPV (65 aa)) is the bZIP domain. A basic motif region spans residues 187 to 205 (RQKRMIKNRESAARSRERK). A coiled-coil region spans residues 202-244 (RERKQAYIAELESLVTQLEEENAKMFKEQEEQHQKRLKELKEM). The leucine-zipper stretch occupies residues 212 to 219 (LESLVTQL).

The protein resides in the nucleus. In terms of biological role, transcription activator that binds to the ABA-responsive elements (ABREs) in vitro. Involved in abiotic stress responses and abscisic acid (ABA) signaling. Involved in the signaling pathway that induces growth inhibition in response to D-allose. The chain is bZIP transcription factor 12 from Oryza sativa subsp. japonica (Rice).